We begin with the raw amino-acid sequence, 304 residues long: Phytol kinase 1, chloroplastic (304 aa).

The N-terminal 59 residues, 1 to 59 (MAATLPLSPINHQLCRFGNNSLTTHRFCSPGFLISSPCFIGLTGMGSATQLRARRSLIS), are a transit peptide targeting the chloroplast. The next 6 helical transmembrane spans lie at 71 to 91 (VGAT…FESL), 105 to 125 (LVHI…SGST), 129 to 149 (YFAA…GLSI), 167 to 187 (ELLK…VFFW), 191 to 211 (PIGM…DIMG), and 227 to 247 (WAGS…LLYY).

This sequence belongs to the polyprenol kinase family.

The protein localises to the plastid. Its subcellular location is the chloroplast membrane. The enzyme catalyses phytol + CTP = phytyl phosphate + CDP + H(+). It participates in cofactor biosynthesis; tocopherol biosynthesis. Its function is as follows. Kinase involved in the activation and reutilization of phytol from chlorophyll degradation in plant metabolism, including tocopherol biosynthesis. Catalyzes the conversion of phytol to phytol monophosphate (PMP) in the presence of CTP or UTP. No activity with ATP or GTP as phosphoryl donor. The protein is Phytol kinase 1, chloroplastic of Arabidopsis thaliana (Mouse-ear cress).